The primary structure comprises 160 residues: uncharacterized protein (160 aa).

Its subcellular location is the plastid. This is an uncharacterized protein from Euglena longa (Euglenophycean alga).